The sequence spans 411 residues: Lissencephaly-1 homolog (411 aa).

A LisH domain is found at 9-41 (QREELNQAIADYLGSNGYGDSLETFRKEADVST). Residues 56 to 83 (TSVIRLQKKVMELEAKLTEAEKEVIEGA) adopt a coiled-coil conformation. 7 WD repeats span residues 106-147 (GHRA…RSLK), 148-187 (GHTD…ECVK), 191-230 (GHDH…CVKT), 233-272 (GHRE…CKVE), 275-334 (DHEH…CLLT), 337-376 (GHDN…CMKT), and 379-411 (AHQH…WECR).

The protein belongs to the WD repeat LIS1/nudF family.

It is found in the cytoplasm. It localises to the cytoskeleton. The protein resides in the microtubule organizing center. The protein localises to the centrosome. Positively regulates the activity of the minus-end directed microtubule motor protein dynein. May enhance dynein-mediated microtubule sliding by targeting dynein to the microtubule plus end. Required for several dynein- and microtubule-dependent processes. The protein is Lissencephaly-1 homolog of Drosophila persimilis (Fruit fly).